A 250-amino-acid polypeptide reads, in one-letter code: Complement factor B-like protease (250 aa).

Sushi domains follow at residues Thr3 to Ala73, Val74 to Asp133, and Gly136 to Ala193. 6 disulfide bridges follow: Cys5-Cys44, Cys30-Cys71, Cys76-Cys118, Cys104-Cys131, Cys138-Cys178, and Cys164-Cys191. Asn115 is a glycosylation site (N-linked (GlcNAc...) asparagine). A glycan (N-linked (GlcNAc...) asparagine) is linked at Asn221.

Belongs to the peptidase S1 family. Plasma.

The protein resides in the secreted. In terms of biological role, required in both the classical and alternate pathways of the complement system. The polypeptide is Complement factor B-like protease (Gallus gallus (Chicken)).